The sequence spans 210 residues: Small ribosomal subunit protein uS5 (210 aa).

The span at 1-23 shows a compositional bias: basic and acidic residues; that stretch reads MARTPSSDRPERGRGGERGDRPN. Residues 1–40 form a disordered region; sequence MARTPSSDRPERGRGGERGDRPNRGRGGAEQTPREREESE. Positions 41–104 constitute an S5 DRBM domain; the sequence is FVDKLVHINR…EQAKRNMIKI (64 aa).

It belongs to the universal ribosomal protein uS5 family. Part of the 30S ribosomal subunit. Contacts proteins S4 and S8.

Its function is as follows. With S4 and S12 plays an important role in translational accuracy. In terms of biological role, located at the back of the 30S subunit body where it stabilizes the conformation of the head with respect to the body. The chain is Small ribosomal subunit protein uS5 from Paramagnetospirillum magneticum (strain ATCC 700264 / AMB-1) (Magnetospirillum magneticum).